Consider the following 2298-residue polypeptide: Non-reducing polyketide synthase pgmA (2298 aa).

An N-terminal acylcarrier protein transacylase domain (SAT) region spans residues 8 to 333 (LFIFGDQTLD…IYNVLKQSPL (326 aa)). Residues 336-361 (YLSSKPAQSRQPVSNEGAPEPGNGRQ) are disordered. Over residues 340–349 (KPAQSRQPVS) the composition is skewed to polar residues. One can recognise a Ketosynthase family 3 (KS3) domain in the interval 360–798 (RQKLAIIGMS…GGNSALLVED (439 aa)). Active-site for beta-ketoacyl synthase activity residues include C532, H667, and H714. The acyl/malonyl transferases stretch occupies residues 901-1193 (VFAFTGQGAH…GMVKGVLGPQ (293 aa)). The For acyl/malonyl transferase activity role is filled by S994. The tract at residues 1283-1415 (HRVVEETHDS…CVVRFRDRGL (133 aa)) is N-terminal hotdog fold. The PKS/mFAS DH domain occupies 1283 to 1589 (HRVVEETHDS…IQGVPRRVLK (307 aa)). The tract at residues 1294–1586 (KTRIVIEADI…QISIQGVPRR (293 aa)) is product template (PT) domainn. The active-site Proton acceptor; for dehydratase activity is H1315. Residues 1438-1589 (VTGETARFNR…IQGVPRRVLK (152 aa)) form a C-terminal hotdog fold region. D1502 functions as the Proton donor; for dehydratase activity in the catalytic mechanism. Residues 1619–1642 (YPVANGHAQATPTSGPVNGEPRPS) form a disordered region. Residues 1641–1716 (PSRFPRALEI…SLRALLSEPE (76 aa)) form the Carrier 1 domain. S1675 carries the post-translational modification O-(pantetheine 4'-phosphoryl)serine. Residues 1716-1762 (ERSTNGMPAASAKDTSRFDEIPPMNGHKTNGHVMNGHSNGSSNGLPD) are disordered. Residues 1751–1760 (GHSNGSSNGL) show a composition bias toward polar residues. In terms of domain architecture, Carrier 2 spans 1765–1840 (KVDFQRVLQI…DLKRYLFPQD (76 aa)). An O-(pantetheine 4'-phosphoryl)serine modification is found at S1799. Residues 1927 to 2178 (VTGASGSLGG…YWTPVEEVAG (252 aa)) are reductase (R) domain.

The protein operates within pigment biosynthesis. It participates in secondary metabolite biosynthesis. Non-reducing polyketide synthase; part of the gene cluster that mediates the biosynthesis of pleosporalin A, ascomycone A, as well as a third cryptic naphthoquinone derived pigment, all responsible for the coloration of conidia. The non-reducing polyketide synthase pgmA is responsible for the condensation of seven acetyl-CoA units to produce the cyclized heptaketide 3-acetonyl-1,6,8-trihydroxy-2-naphthaldehyde. The pathway begins with the biosynthesis of the cyclized heptaketide 3-acetonyl-1,6,8-trihydroxy-2-naphthaldehyde by the NR-PKS pgmA. The C-6 hydroxyl group is further methylated by the O-methyltransferase pgmB to yield fusarubinaldehyde which is in turn oxidized by the cytochrome P450 monooxygenase pgmC at C-9. The C-1 hydroxyl group is then methylated spontaneously. Although pgmE, pgmD and pgmH are essential for the production of pleosporalin A, it is not the case for the 2 other final products and it remains difficult to assign a specific function to each enzyme. PgmF and pgmG seem not to be involved in pigment biosynthesis although they were regulated by the cluster-specific transcription factor pgmR. In Aspergillus terreus (strain NIH 2624 / FGSC A1156), this protein is Non-reducing polyketide synthase pgmA.